Reading from the N-terminus, the 325-residue chain is tRNA U34 carboxymethyltransferase (325 aa).

Residues lysine 91, tryptophan 105, lysine 110, glycine 130, 152–154 (DPS), methionine 196, tyrosine 200, and arginine 315 each bind carboxy-S-adenosyl-L-methionine.

The protein belongs to the class I-like SAM-binding methyltransferase superfamily. CmoB family. In terms of assembly, homotetramer.

The catalysed reaction is carboxy-S-adenosyl-L-methionine + 5-hydroxyuridine(34) in tRNA = 5-carboxymethoxyuridine(34) in tRNA + S-adenosyl-L-homocysteine + H(+). Its function is as follows. Catalyzes carboxymethyl transfer from carboxy-S-adenosyl-L-methionine (Cx-SAM) to 5-hydroxyuridine (ho5U) to form 5-carboxymethoxyuridine (cmo5U) at position 34 in tRNAs. This is tRNA U34 carboxymethyltransferase from Aeromonas salmonicida (strain A449).